A 438-amino-acid polypeptide reads, in one-letter code: Iroquois-class homeodomain protein IRX-6 (438 aa).

The homeobox DNA-binding region spans 143–205 (SAGRRKNATR…NARRRLKKEN (63 aa)). 2 disordered regions span residues 205–270 (NKMT…EAAV) and 388–438 (PRDS…GAEG). The segment covering 214–223 (KGGEERKADS) has biased composition (basic and acidic residues). Residues 252 to 268 (LEDLEEEEEEEEAEEEA) are compositionally biased toward acidic residues.

It belongs to the TALE/IRO homeobox family. As to expression, expressed in a subset of retinal ganglion cells and bipolar cells; including in type 2 and type 3a bipolar cells.

Its subcellular location is the nucleus. In terms of biological role, transcription factor. Binds to the iroquois binding site (IBS) motif of target genes to regulate gene expression; functions as a transcriptional activator or repressor. Modulates expression of RCVRN, VSX1, BHLHE22/BHLHB5 and TACR3/Nk3r. Required downstream of retinal bipolar cell specification for the terminal differentiation of type 2, type 3a and possibly type 6 bipolar cells. This is Iroquois-class homeodomain protein IRX-6 (Irx6) from Mus musculus (Mouse).